Reading from the N-terminus, the 312-residue chain is 2-phosphoglycerate kinase (312 aa).

An ATP-cone domain is found at serine 8 to serine 95.

This sequence belongs to the 2-phosphoglycerate kinase family. A divalent metal cation is required as a cofactor.

The enzyme catalyses (2R)-2-phosphoglycerate + ATP = (2R)-2,3-bisphosphoglycerate + ADP + H(+). The protein operates within thermoadapter biosynthesis; cyclic 2,3-diphosphoglycerate biosynthesis; cyclic 2,3-diphosphoglycerate from 2-phospho-D-glycerate: step 1/2. In terms of biological role, catalyzes the phosphorylation of 2-phosphoglycerate to 2,3-diphosphoglycerate. Involved in the biosynthesis of cyclic 2,3-bisphosphoglycerate, a thermoprotectant. The protein is 2-phosphoglycerate kinase of Methanococcus maripaludis (strain C7 / ATCC BAA-1331).